The chain runs to 201 residues: RILP-like protein 2 (201 aa).

In terms of domain architecture, RH1 spans 14 to 108 (GPEIALDKDP…LKDGPQMGVG (95 aa)). The stretch at 67 to 155 (LEMLEALVNQ…AQDELQCYKS (89 aa)) forms a coiled coil. Positions 121-197 (RPRFTLQELR…TVKSLFSFKQ (77 aa)) constitute an RH2 domain. Positions 177-201 (SPRENESKEKSTVKSLFSFKQGKQT) are disordered. Positions 179 to 188 (RENESKEKST) are enriched in basic and acidic residues.

The protein belongs to the RILPL family.

The protein resides in the cytoplasm. Its subcellular location is the cytosol. The protein localises to the cytoskeleton. It localises to the microtubule organizing center. It is found in the centrosome. The protein resides in the cell projection. Its subcellular location is the cilium. Involved in cell shape and neuronal morphogenesis, positively regulating the establishment and maintenance of dendritic spines. Plays a role in cellular protein transport. This Xenopus tropicalis (Western clawed frog) protein is RILP-like protein 2 (rilpl2).